A 283-amino-acid polypeptide reads, in one-letter code: Pantothenate synthetase (283 aa).

Met-30–His-37 is a binding site for ATP. His-37 functions as the Proton donor in the catalytic mechanism. Gln-61 is a binding site for (R)-pantoate. Gln-61 is a beta-alanine binding site. Gly-147–Asp-150 contacts ATP. Gln-153 provides a ligand contact to (R)-pantoate. Residues Val-176 and Met-184–Arg-187 contribute to the ATP site.

This sequence belongs to the pantothenate synthetase family. As to quaternary structure, homodimer.

The protein resides in the cytoplasm. It carries out the reaction (R)-pantoate + beta-alanine + ATP = (R)-pantothenate + AMP + diphosphate + H(+). The protein operates within cofactor biosynthesis; (R)-pantothenate biosynthesis; (R)-pantothenate from (R)-pantoate and beta-alanine: step 1/1. Its function is as follows. Catalyzes the condensation of pantoate with beta-alanine in an ATP-dependent reaction via a pantoyl-adenylate intermediate. The polypeptide is Pantothenate synthetase (Thermoanaerobacter sp. (strain X514)).